The primary structure comprises 508 residues: Photosystem II CP47 reaction center protein (508 aa).

6 helical membrane-spanning segments follow: residues 21-36 (SVHIMHTALVAGWAGS), 101-115 (IMFSGLCFLAAIWHW), 140-156 (GIHLFLAGVACFGFGAF), 203-218 (IAAGTLGILAGLFHLS), 237-252 (VLSSSIAAVFFAAFVV), and 457-472 (SFALLFFFGHIWHGAR).

The protein belongs to the PsbB/PsbC family. PsbB subfamily. As to quaternary structure, PSII is composed of 1 copy each of membrane proteins PsbA, PsbB, PsbC, PsbD, PsbE, PsbF, PsbH, PsbI, PsbJ, PsbK, PsbL, PsbM, PsbT, PsbX, PsbY, PsbZ, Psb30/Ycf12, at least 3 peripheral proteins of the oxygen-evolving complex and a large number of cofactors. It forms dimeric complexes. It depends on Binds multiple chlorophylls. PSII binds additional chlorophylls, carotenoids and specific lipids. as a cofactor.

It is found in the plastid. It localises to the chloroplast thylakoid membrane. Functionally, one of the components of the core complex of photosystem II (PSII). It binds chlorophyll and helps catalyze the primary light-induced photochemical processes of PSII. PSII is a light-driven water:plastoquinone oxidoreductase, using light energy to abstract electrons from H(2)O, generating O(2) and a proton gradient subsequently used for ATP formation. The sequence is that of Photosystem II CP47 reaction center protein from Guizotia abyssinica (Niger).